The chain runs to 660 residues: T-box protein H15 (660 aa).

Residues 1-11 (MLLSNQPANTK) are compositionally biased toward polar residues. 3 disordered regions span residues 1-72 (MLLS…NHNQ), 90-122 (GGNA…DDVD), and 169-266 (QQQQ…PKIV). Over residues 12–22 (PQQTPSPSQTQ) the composition is skewed to low complexity. Residues 23–33 (NFKSKLQQQIV) are compositionally biased toward polar residues. Positions 35–47 (AAAAAAANIANGS) are enriched in low complexity. Residues 48–71 (SHHHHHQNHHHHHPLNNHHNHNHN) are compositionally biased toward basic residues. Composition is skewed to low complexity over residues 93 to 108 (APSS…SPAS) and 169 to 179 (QQQQQQQQQRQ). The span at 180 to 198 (QTHHHATTGKQQRQHHNHH) shows a compositional bias: basic residues. Residues 199 to 233 (SSNTNNSSNSGNSNTNSKSSSQRGRSAAAVGAAAT) are compositionally biased toward low complexity. Residues 234–243 (PSPPPPPPSQ) are compositionally biased toward pro residues. The T-box DNA-binding region spans 286–472 (LWDKFHELGT…SNPFAKGFRD (187 aa)). The tract at residues 598–660 (NRTPPPSMAV…PPASNRAESP (63 aa)) is disordered. Pro residues predominate over residues 600 to 613 (TPPPSMAVAPPAPA). Residues 614–624 (TPTSSCGSASP) are compositionally biased toward low complexity. Positions 643–660 (QVPQHQASPPASNRAESP) are enriched in polar residues.

The protein localises to the nucleus. This is T-box protein H15 (H15) from Drosophila melanogaster (Fruit fly).